Consider the following 113-residue polypeptide: Putative pterin-4-alpha-carbinolamine dehydratase (113 aa).

It belongs to the pterin-4-alpha-carbinolamine dehydratase family.

It carries out the reaction (4aS,6R)-4a-hydroxy-L-erythro-5,6,7,8-tetrahydrobiopterin = (6R)-L-erythro-6,7-dihydrobiopterin + H2O. The polypeptide is Putative pterin-4-alpha-carbinolamine dehydratase (Nitrosospira multiformis (strain ATCC 25196 / NCIMB 11849 / C 71)).